A 155-amino-acid polypeptide reads, in one-letter code: Large ribosomal subunit protein uL11 (155 aa).

The protein belongs to the universal ribosomal protein uL11 family. As to quaternary structure, part of the ribosomal stalk of the 50S ribosomal subunit. Interacts with L10 and the large rRNA to form the base of the stalk. L10 forms an elongated spine to which L12 dimers bind in a sequential fashion forming a multimeric L10(L12)X complex. In terms of processing, one or more lysine residues are methylated.

Functionally, forms part of the ribosomal stalk which helps the ribosome interact with GTP-bound translation factors. The sequence is that of Large ribosomal subunit protein uL11 from Malacoplasma penetrans (strain HF-2) (Mycoplasma penetrans).